The following is a 503-amino-acid chain: Chromodomain Y-like protein 2 (503 aa).

Residues 7–67 (YEVERIVDKR…LHLSKDKRVK (61 aa)) form the Chromo domain. Residues 66–177 (VKSGKQAGAS…GNGSHQPDLE (112 aa)) form a disordered region. Positions 88–98 (RLSHRPLEPGK) are enriched in basic and acidic residues. Positions 101–120 (PSSHKRKRVNSPLSRPKKGS) are enriched in basic residues. Over residues 130–140 (KTVSYRTTPSG) the composition is skewed to polar residues.

In terms of assembly, interacts (via chromo domain) with histone H3K9me3.

The protein localises to the nucleus. The protein is Chromodomain Y-like protein 2 (Cdyl2) of Mus musculus (Mouse).